Consider the following 61-residue polypeptide: Small ribosomal subunit protein bS21 (61 aa).

The segment at 36–61 (EHYESPSVKRKKKAEAARKRKYKYGR) is disordered. A compositionally biased stretch (basic residues) spans 43 to 61 (VKRKKKAEAARKRKYKYGR).

The protein belongs to the bacterial ribosomal protein bS21 family.

The protein is Small ribosomal subunit protein bS21 (rpsU) of Caldanaerobacter subterraneus subsp. tengcongensis (strain DSM 15242 / JCM 11007 / NBRC 100824 / MB4) (Thermoanaerobacter tengcongensis).